The primary structure comprises 521 residues: Probable inorganic phosphate transporter 1-3 (521 aa).

Topologically, residues 1–24 (MADQQLGVLKALDVAKTQLYHFTA) are cytoplasmic. A helical transmembrane segment spans residues 25-45 (IVIAGMGFFTDAYDLFCVSLV). Topologically, residues 46 to 70 (TKLLGRLYYFNPTSAKPGSLPPHVA) are extracellular. The chain crosses the membrane as a helical span at residues 71–91 (AAVNGVALCGTLAGQLFFGWL). At 92–99 (GDKLGRKK) the chain is on the cytoplasmic side. A helical membrane pass occupies residues 100-120 (VYGITLIMMILCSVASGLSLG). The Extracellular segment spans residues 121-131 (NSAKGVMTTLC). Residues 132 to 152 (FFRFWLGFGIGGDYPLSATIM) form a helical membrane-spanning segment. Over 153–161 (SEYANKKTR) the chain is Cytoplasmic. A helical transmembrane segment spans residues 162–182 (GAFIAAVFAMQGVGILAGGFV). Over 183-211 (ALAVSSIFDKKFPSPTYEQDRFLSTPPQA) the chain is Extracellular. Residues 212-232 (DYIWRIIVMFGALPAALTYYW) traverse the membrane as a helical segment. The Cytoplasmic portion of the chain corresponds to 233–292 (RMKMPETARYTALVAKNIKQATADMSKVLQTDLELEERVEDDVKDPKKNYGLFSKEFLRR). A helical membrane pass occupies residues 293-313 (HGLHLLGTTSTWFLLDIAFYS). At 314–348 (QNLFQKDIFSAIGWIPKAATMNAIHEVFKIARAQT) the chain is on the extracellular side. Residues 349-369 (LIALCSTVPGYWFTVAFIDII) traverse the membrane as a helical segment. Over 370–371 (GR) the chain is Cytoplasmic. Residues 372 to 392 (FAIQLMGFFMMTVFMFAIAFP) form a helical membrane-spanning segment. Over 393–402 (YNHWILPDNR) the chain is Extracellular. Residues 403–423 (IGFVVMYSLTFFFANFGPNAT) traverse the membrane as a helical segment. Over 424 to 441 (TFIVPAEIFPARLRSTCH) the chain is Cytoplasmic. Residues 442–462 (GISAATGKAGAIVGAFGFLYA) traverse the membrane as a helical segment. At 463–484 (AQPQDKTKTDAGYPPGIGVKNS) the chain is on the extracellular side. Residues 485–505 (LIMLGVINFVGMLFTFLVPEP) form a helical membrane-spanning segment. Residues 506 to 521 (KGKSLEELSGEAEVDK) are Cytoplasmic-facing.

The protein belongs to the major facilitator superfamily. Phosphate:H(+) symporter (TC 2.A.1.9) family. Mainly expressed in roots, especially in the stele of the primary root, the pericycle and trichoblasts of secondary roots. To a lower extent, present in hydathodes and vascular tissues of young leaves.

It localises to the membrane. High-affinity transporter for external inorganic phosphate. In Arabidopsis thaliana (Mouse-ear cress), this protein is Probable inorganic phosphate transporter 1-3 (PHT1-3).